The primary structure comprises 932 residues: 2-oxoglutarate dehydrogenase E1 component (932 aa).

It belongs to the alpha-ketoglutarate dehydrogenase family. As to quaternary structure, homodimer. Part of the 2-oxoglutarate dehydrogenase (OGDH) complex composed of E1 (2-oxoglutarate dehydrogenase), E2 (dihydrolipoamide succinyltransferase) and E3 (dihydrolipoamide dehydrogenase); the complex contains multiple copies of the three enzymatic components (E1, E2 and E3). Thiamine diphosphate serves as cofactor.

It carries out the reaction N(6)-[(R)-lipoyl]-L-lysyl-[protein] + 2-oxoglutarate + H(+) = N(6)-[(R)-S(8)-succinyldihydrolipoyl]-L-lysyl-[protein] + CO2. In terms of biological role, E1 component of the 2-oxoglutarate dehydrogenase (OGDH) complex which catalyzes the decarboxylation of 2-oxoglutarate, the first step in the conversion of 2-oxoglutarate to succinyl-CoA and CO(2). The chain is 2-oxoglutarate dehydrogenase E1 component from Staphylococcus aureus (strain bovine RF122 / ET3-1).